The primary structure comprises 409 residues: tRNA(Met) cytidine acetate ligase (409 aa).

Residues 7–20, glycine 102, asparagine 169, and arginine 194 contribute to the ATP site; that span reads VVEYNPMHNGHLYH.

It belongs to the TmcAL family.

The protein resides in the cytoplasm. It catalyses the reaction cytidine(34) in elongator tRNA(Met) + acetate + ATP = N(4)-acetylcytidine(34) in elongator tRNA(Met) + AMP + diphosphate. In terms of biological role, catalyzes the formation of N(4)-acetylcytidine (ac(4)C) at the wobble position of elongator tRNA(Met), using acetate and ATP as substrates. First activates an acetate ion to form acetyladenylate (Ac-AMP) and then transfers the acetyl group to tRNA to form ac(4)C34. In Clostridium botulinum (strain ATCC 19397 / Type A), this protein is tRNA(Met) cytidine acetate ligase.